The sequence spans 307 residues: Small ribosomal subunit biogenesis GTPase RsgA (307 aa).

Residues 80-237 (KADLRQTIVS…IVDTPGIKEF (158 aa)) enclose the CP-type G domain. Residues 129 to 132 (NKID) and 180 to 188 (GQSGVGKSS) each bind GTP. 4 residues coordinate Zn(2+): Cys261, Cys266, His268, and Cys274.

It belongs to the TRAFAC class YlqF/YawG GTPase family. RsgA subfamily. In terms of assembly, monomer. Associates with 30S ribosomal subunit, binds 16S rRNA. The cofactor is Zn(2+).

It localises to the cytoplasm. Functionally, one of several proteins that assist in the late maturation steps of the functional core of the 30S ribosomal subunit. Helps release RbfA from mature subunits. May play a role in the assembly of ribosomal proteins into the subunit. Circularly permuted GTPase that catalyzes slow GTP hydrolysis, GTPase activity is stimulated by the 30S ribosomal subunit. This chain is Small ribosomal subunit biogenesis GTPase RsgA, found in Borreliella burgdorferi (strain ATCC 35210 / DSM 4680 / CIP 102532 / B31) (Borrelia burgdorferi).